Consider the following 355-residue polypeptide: 3-dehydroquinate synthase (355 aa).

NAD(+)-binding positions include 69-74 (DGEQHK), 103-107 (GVIGD), 127-128 (TT), Lys-140, Lys-149, and 167-170 (TLQT). 3 residues coordinate Zn(2+): Glu-182, His-245, and His-262.

The protein belongs to the sugar phosphate cyclases superfamily. Dehydroquinate synthase family. Co(2+) serves as cofactor. The cofactor is Zn(2+). It depends on NAD(+) as a cofactor.

The protein resides in the cytoplasm. It catalyses the reaction 7-phospho-2-dehydro-3-deoxy-D-arabino-heptonate = 3-dehydroquinate + phosphate. It participates in metabolic intermediate biosynthesis; chorismate biosynthesis; chorismate from D-erythrose 4-phosphate and phosphoenolpyruvate: step 2/7. Its function is as follows. Catalyzes the conversion of 3-deoxy-D-arabino-heptulosonate 7-phosphate (DAHP) to dehydroquinate (DHQ). The sequence is that of 3-dehydroquinate synthase from Pseudoalteromonas atlantica (strain T6c / ATCC BAA-1087).